Reading from the N-terminus, the 224-residue chain is Small ribosomal subunit protein uS13 (224 aa).

A compositionally biased stretch (basic and acidic residues) spans 1 to 17 (MSEKTDKTEKKQKKAEE). 2 disordered regions span residues 1–64 (MSEK…AEEK) and 184–224 (HERG…EDKK). Low complexity-rich tracts occupy residues 20 to 30 (ETASAEAAPAK) and 38 to 47 (AKPAEGAPAD). Over residues 210-224 (KKGEQGGAAKKEDKK) the composition is skewed to basic and acidic residues.

Belongs to the universal ribosomal protein uS13 family. As to quaternary structure, part of the 30S ribosomal subunit. Forms a loose heterodimer with protein S19. Forms two bridges to the 50S subunit in the 70S ribosome.

Functionally, located at the top of the head of the 30S subunit, it contacts several helices of the 16S rRNA. In the 70S ribosome it contacts the 23S rRNA (bridge B1a) and protein L5 of the 50S subunit (bridge B1b), connecting the 2 subunits; these bridges are implicated in subunit movement. This Methanocella arvoryzae (strain DSM 22066 / NBRC 105507 / MRE50) protein is Small ribosomal subunit protein uS13.